The primary structure comprises 719 residues: MGEKNGDAKTFWMELEDDGKVDFIFEQVQNVLQSLKQKIKDGSATNKEYIQAMILVNEATIINSSTSIKGASQKEVNAQSSDPMPVTQKEQENKSNAFPSTSCENSFPEDCTFLTTENKEILSLEDKVVDFREKDSSSNLSYQSHDCSGACLMKMPLNLKGENPLQLPIKCHFQRRHAKTNSHSSALHVSYKTPCGRSLRNVEEVFRYLLETECNFLFTDNFSFNTYVQLARNYPKQKEVVSDVDISNGVESVPISFCNEIDSRKLPQFKYRKTVWPRAYNLTNFSSMFTDSCDCSEGCIDITKCACLQLTARNAKTSPLSSDKITTGYKYKRLQRQIPTGIYECSLLCKCNRQLCQNRVVQHGPQVRLQVFKTEQKGWGVRCLDDIDRGTFVCIYSGRLLSRANTEKSYGIDENGRDENTMKNIFSKKRKLEVACSDCEVEVLPLGLETHPRTAKTEKCPPKFSNNPKELTVETKYDNISRIQYHSVIRDPESKTAIFQHNGKKMEFVSSESVTPEDNDGFKPPREHLNSKTKGAQKDSSSNHVDEFEDNLLIESDVIDITKYREETPPRSRCNQATTLDNQNIKKAIEVQIQKPQEGRSTACQRQQVFCDEELLSETKNTSSDSLTKFNKGNVFLLDATKEGNVGRFLNHSCCPNLLVQNVFVETHNRNFPLVAFFTNRYVKARTELTWDYGYEAGTVPEKEIFCQCGVNKCRKKIL.

Residues 72-82 (SQKEVNAQSSD) are compositionally biased toward polar residues. Positions 72 to 102 (SQKEVNAQSSDPMPVTQKEQENKSNAFPSTS) are disordered. One can recognise an MBD domain in the interval 157–229 (LNLKGENPLQ…DNFSFNTYVQ (73 aa)). A Pre-SET domain is found at 291 to 364 (DSCDCSEGCI…LCQNRVVQHG (74 aa)). C293, C295, C299, C305, C307, C345, C349, C351, and C356 together coordinate Zn(2+). Residues 367–694 (VRLQVFKTEQ…ARTELTWDYG (328 aa)) form the SET domain. S-adenosyl-L-methionine contacts are provided by residues 377–379 (KGW) and D418. The interval 508–547 (FVSSESVTPEDNDGFKPPREHLNSKTKGAQKDSSSNHVDE) is disordered. Residues 520–530 (DGFKPPREHLN) are compositionally biased toward basic and acidic residues. Positions 532 to 543 (KTKGAQKDSSSN) are enriched in polar residues. S-adenosyl-L-methionine-binding positions include R648 and 651-652 (NH). 4 residues coordinate Zn(2+): C654, C707, C709, and C714.

It belongs to the class V-like SAM-binding methyltransferase superfamily. In terms of tissue distribution, ubiquitous. Highest expression in heart, testis and ovary.

The protein localises to the nucleus. It is found in the chromosome. It catalyses the reaction N(6),N(6)-dimethyl-L-lysyl(9)-[histone H3] + S-adenosyl-L-methionine = N(6),N(6),N(6)-trimethyl-L-lysyl(9)-[histone H3] + S-adenosyl-L-homocysteine + H(+). Histone methyltransferase involved in left-right axis specification in early development and mitosis. Specifically trimethylates 'Lys-9' of histone H3 (H3K9me3). H3K9me3 is a specific tag for epigenetic transcriptional repression that recruits HP1 (CBX1, CBX3 and/or CBX5) proteins to methylated histones. Contributes to H3K9me3 in both the interspersed repetitive elements and centromere-associated repeats. Plays a role in chromosome condensation and segregation during mitosis. This chain is Histone-lysine N-methyltransferase SETDB2 (SETDB2), found in Homo sapiens (Human).